Here is a 414-residue protein sequence, read N- to C-terminus: 3-oxo-tetronate kinase (414 aa).

ATP is bound by residues serine 255, 355–358 (GGET), and glycine 398.

It belongs to the four-carbon acid sugar kinase family.

It carries out the reaction 3-dehydro-L-erythronate + ATP = 3-dehydro-4-O-phospho-L-erythronate + ADP + H(+). The catalysed reaction is 3-dehydro-D-erythronate + ATP = 3-dehydro-4-O-phospho-D-erythronate + ADP + H(+). Catalyzes the ATP-dependent phosphorylation of 3-oxo-tetronate to 3-oxo-tetronate 4-phosphate. In Actinobacillus succinogenes (strain ATCC 55618 / DSM 22257 / CCUG 43843 / 130Z), this protein is 3-oxo-tetronate kinase.